A 503-amino-acid polypeptide reads, in one-letter code: Maturase K (503 aa).

Belongs to the intron maturase 2 family. MatK subfamily.

It is found in the plastid. Its subcellular location is the chloroplast. In terms of biological role, usually encoded in the trnK tRNA gene intron. Probably assists in splicing its own and other chloroplast group II introns. The protein is Maturase K of Vicia faba (Broad bean).